A 153-amino-acid polypeptide reads, in one-letter code: NAD(P)H-quinone oxidoreductase subunit N (153 aa).

The protein belongs to the complex I NdhN subunit family. As to quaternary structure, NDH-1 can be composed of about 15 different subunits; different subcomplexes with different compositions have been identified which probably have different functions.

It localises to the cellular thylakoid membrane. The catalysed reaction is a plastoquinone + NADH + (n+1) H(+)(in) = a plastoquinol + NAD(+) + n H(+)(out). The enzyme catalyses a plastoquinone + NADPH + (n+1) H(+)(in) = a plastoquinol + NADP(+) + n H(+)(out). Functionally, NDH-1 shuttles electrons from an unknown electron donor, via FMN and iron-sulfur (Fe-S) centers, to quinones in the respiratory and/or the photosynthetic chain. The immediate electron acceptor for the enzyme in this species is believed to be plastoquinone. Couples the redox reaction to proton translocation, and thus conserves the redox energy in a proton gradient. Cyanobacterial NDH-1 also plays a role in inorganic carbon-concentration. This Prochlorococcus marinus (strain MIT 9211) protein is NAD(P)H-quinone oxidoreductase subunit N.